Here is a 216-residue protein sequence, read N- to C-terminus: Adenylate kinase (216 aa).

ATP is bound at residue 11–16 (GSGKGT). The tract at residues 31–60 (ATGDLFRKAIECGDELGDTVKSYMERGELV) is NMP. AMP contacts are provided by residues Thr-32, Arg-37, 58–60 (ELV), 86–89 (GFPR), and Gln-93. Positions 127–163 (GRWVCRSCQSPYQSGCAEVTKGKCSRCQGGLYQRPDD) are LID. Position 128 (Arg-128) interacts with ATP. 4 residues coordinate Zn(2+): Cys-131, Cys-134, Cys-150, and Cys-153. Arg-160 and Arg-171 together coordinate AMP. Residue Ala-199 coordinates ATP.

The protein belongs to the adenylate kinase family. Monomer.

The protein resides in the cytoplasm. It carries out the reaction AMP + ATP = 2 ADP. The protein operates within purine metabolism; AMP biosynthesis via salvage pathway; AMP from ADP: step 1/1. In terms of biological role, catalyzes the reversible transfer of the terminal phosphate group between ATP and AMP. Plays an important role in cellular energy homeostasis and in adenine nucleotide metabolism. The protein is Adenylate kinase of Dehalococcoides mccartyi (strain CBDB1).